Reading from the N-terminus, the 962-residue chain is Glycine dehydrogenase (decarboxylating) (962 aa).

Residue Lys-709 is modified to N6-(pyridoxal phosphate)lysine.

Belongs to the GcvP family. In terms of assembly, the glycine cleavage system is composed of four proteins: P, T, L and H. Requires pyridoxal 5'-phosphate as cofactor.

The enzyme catalyses N(6)-[(R)-lipoyl]-L-lysyl-[glycine-cleavage complex H protein] + glycine + H(+) = N(6)-[(R)-S(8)-aminomethyldihydrolipoyl]-L-lysyl-[glycine-cleavage complex H protein] + CO2. The glycine cleavage system catalyzes the degradation of glycine. The P protein binds the alpha-amino group of glycine through its pyridoxal phosphate cofactor; CO(2) is released and the remaining methylamine moiety is then transferred to the lipoamide cofactor of the H protein. The protein is Glycine dehydrogenase (decarboxylating) of Shewanella baltica (strain OS195).